The sequence spans 245 residues: PF03932 family protein CutC (245 aa).

The protein belongs to the CutC family.

It is found in the cytoplasm. The sequence is that of PF03932 family protein CutC from Photobacterium profundum (strain SS9).